We begin with the raw amino-acid sequence, 1217 residues long: MTIPEKPQGVIWTDAQWQSIYATGQDVLVAAAAGSGKTAVLVERIIQKILRDGIDVDRLLVVTFTNLSAREMKHRVDQRIQEASIADPANAHLKNQRIKIHQAQISTLHSFCLKLIQQHYDVLNIDPNFRTSSEAENILLLEQTIDEVIEQHYDILDPAFIELTEQLSSDRSDDQFRMIIKQLYFFSVANPNPTNWLDQLVTPYEEEAQQAQLIQLLTDLSKVFITAAYDALNKAYDLFSMMDSVDKHLAVIEDERRLMGRVLEGGFIDIPYLTGHEFGARLPNVTAKIKEANEMMVDALEDAKLQYKKYKSLIDKVKSDYFSREADDLKADMQQLAPRVKYLARIVKDVMSEFNRKKRSKNILDFSDYEHFALQILTNEDGSPSEIAESYRQHFQEILVDEYQDTNRVQEKILSCIKTGDEHNGNLFMVGDVKQSIYKFRQADPSLFIEKYQRFTIDGDGTGRRIDLSQNFRSRKEVLSTTNYIFKHMMDEQVGEVKYDEAAQLYYGAPYDESDHPVNLKVLVEADQEHSDLTGSEQEAHFIVEQVKDILEHQKVYDMKTGSYRSATYKDIVILERSFGQARNLQQAFKNEDIPFHVNSREGYFEQTEVRLVLSFLRAIDNPLQDIYLVGLMRSVIYQFKEDELAQIRILSPNDDYFYQSIVNYINDEAADAILVDKLKMFLSDIQSYQQYSKDHPVYQLIDKFYNDHYVIQYFSGLIGGRGRRANLYGLFNKAIEFENSSFRGLYQFIRFIDELIERGKDFGEENVVGPNDNVVRMMTIHSSKGLEFPFVIYSGLSKDFNKRDLKQPVILNQQFGLGMDYFDVDKEMAFPSLASVAYRAVAEKELVSEEMRLVYVALTRAKEQLYLIGRVKNDKSLLELEQLSISGEHIAVNERLTSPNPFHLIYSILSKHQSASIPDDLKFEKDIAQVEDSSRPNVNISIIYFEDVSTETILDNNEYRSVNQLETMQNGNEDVKAQIKHQLDYQYPYVNDTKKPSKQSVSELKRQYETEESGTSYERVRQYRIGFSTYERPKFLSEQGKRKANEIGTLMHTVMQHLPFKKERISEVELHQYIDGLIDKHIIEADAKKDIRMDEIMTFINSELYSIIAEAEQVYRELPFVVNQALVDQLPQGDEDVSIIQGMIDLIFVKDGVHYFVDYKTDAFNRRRGMTDEEIGTQLKNKYKIQMKYYQNTLQTILNKEVKGYLYFFKFGTLQL.

One can recognise a UvrD-like helicase ATP-binding domain in the interval 10–475 (VIWTDAQWQS…IDLSQNFRSR (466 aa)). An ATP-binding site is contributed by 31–38 (AAAGSGKT). A UvrD-like helicase C-terminal domain is found at 476-786 (KEVLSTTNYI…RMMTIHSSKG (311 aa)).

The protein belongs to the helicase family. AddA subfamily. As to quaternary structure, heterodimer of AddA and AddB/RexB. The cofactor is Mg(2+).

The enzyme catalyses Couples ATP hydrolysis with the unwinding of duplex DNA by translocating in the 3'-5' direction.. It carries out the reaction ATP + H2O = ADP + phosphate + H(+). The heterodimer acts as both an ATP-dependent DNA helicase and an ATP-dependent, dual-direction single-stranded exonuclease. Recognizes the chi site generating a DNA molecule suitable for the initiation of homologous recombination. The AddA nuclease domain is required for chi fragment generation; this subunit has the helicase and 3' -&gt; 5' nuclease activities. This chain is ATP-dependent helicase/nuclease subunit A, found in Staphylococcus aureus (strain MSSA476).